A 67-amino-acid polypeptide reads, in one-letter code: WPPVEGRPSCKRCGACTRMWPPEANRCVCDDIVPQCHEGCSKCEKVDTRSGKPLYQCQSFEYYNCAA.

4 cysteine pairs are disulfide-bonded: Cys-10–Cys-29, Cys-16–Cys-27, Cys-36–Cys-43, and Cys-40–Cys-57.

The protein belongs to the Bowman-Birk serine protease inhibitor family. In terms of tissue distribution, expressed in bulb (at protein level).

In terms of biological role, serine protease inhibitor. Inhibits trypsin (Ki=12nM) and weakly inhibits chymotrypsin with (Ki=460nm). Does not inhibit bacterial subtilisin. This is Bowman-Birk type proteinase inhibitor A4 from Hyacinthus orientalis (Common hyacinth).